Here is a 260-residue protein sequence, read N- to C-terminus: Dolichol-phosphate mannosyltransferase subunit 1 (260 aa).

A disordered region spans residues 1–20 (MAAEEASRSSPRFRREPKGR). Position 2 is an N-acetylalanine (A2). Position 9 is a phosphoserine (S9). 11 residues coordinate GDP-alpha-D-mannose: P32, Y34, E36, I63, D65, D118, A119, D120, R147, R234, and K240. Residue D120 participates in Mg(2+) binding. D120 lines the Mn(2+) pocket.

It belongs to the glycosyltransferase 2 family. As to quaternary structure, component of the dolichol-phosphate mannose (DPM) synthase complex composed of DPM1, DPM2 and DPM3; within the complex, directly interacts with DPM3. This interaction may stabilize DPM1. Mg(2+) is required as a cofactor. It depends on Mn(2+) as a cofactor. Ca(2+) serves as cofactor.

The protein localises to the endoplasmic reticulum. The enzyme catalyses a di-trans,poly-cis-dolichyl phosphate + GDP-alpha-D-mannose = a di-trans,poly-cis-dolichyl beta-D-mannosyl phosphate + GDP. It functions in the pathway protein modification; protein glycosylation. In terms of biological role, transfers mannose from GDP-mannose to dolichol monophosphate to form dolichol phosphate mannose (Dol-P-Man) which is the mannosyl donor in pathways leading to N-glycosylation, glycosyl phosphatidylinositol membrane anchoring, and O-mannosylation of proteins; catalytic subunit of the dolichol-phosphate mannose (DPM) synthase complex. The sequence is that of Dolichol-phosphate mannosyltransferase subunit 1 (DPM1) from Bos taurus (Bovine).